The chain runs to 519 residues: Exodeoxyribonuclease 7 large subunit (519 aa).

The tract at residues 500–519 (VGRGKTRKPKEEPPAQGSLL) is disordered.

The protein belongs to the XseA family. In terms of assembly, heterooligomer composed of large and small subunits.

Its subcellular location is the cytoplasm. The catalysed reaction is Exonucleolytic cleavage in either 5'- to 3'- or 3'- to 5'-direction to yield nucleoside 5'-phosphates.. Bidirectionally degrades single-stranded DNA into large acid-insoluble oligonucleotides, which are then degraded further into small acid-soluble oligonucleotides. The polypeptide is Exodeoxyribonuclease 7 large subunit (Cereibacter sphaeroides (strain KD131 / KCTC 12085) (Rhodobacter sphaeroides)).